We begin with the raw amino-acid sequence, 192 residues long: Late embryogenesis abundant protein 47 (192 aa).

Residues 5–9 (QLQKP) carry the Nuclear localization signal (NLS) motif. 2 consecutive SMP domains span residues 68–125 (ITIG…LNAR) and 133–190 (TTLA…RINQ). Residues 146-174 (LPSDKAATRKDAEGVTGAEMRNDPHLTTY) are disordered. Positions 147–158 (PSDKAATRKDAE) are enriched in basic and acidic residues.

Belongs to the LEA type SMP family.

Its subcellular location is the cytoplasm. The protein resides in the nucleus. Its function is as follows. LEA proteins are late embryonic proteins abundant in higher plant seed embryos. The function of those proteins is not known. This chain is Late embryogenesis abundant protein 47, found in Arabidopsis thaliana (Mouse-ear cress).